A 556-amino-acid polypeptide reads, in one-letter code: Cytochrome P450 4g1 (556 aa).

Residues glutamate 356 and cysteine 497 each coordinate heme.

The protein belongs to the cytochrome P450 family. Heme serves as cofactor.

The protein localises to the endoplasmic reticulum membrane. Its subcellular location is the microsome membrane. In terms of biological role, may be involved in the metabolism of insect hormones and in the breakdown of synthetic insecticides. This Drosophila melanogaster (Fruit fly) protein is Cytochrome P450 4g1 (Cyp4g1).